The chain runs to 380 residues: Ribosomal RNA large subunit methyltransferase F (380 aa).

2 disordered regions span residues 1-54 and 260-279; these read MSHK…PRNA and SQVMSPQVQPSGKVKPATDK. Over residues 21–32 the composition is skewed to low complexity; it reads QRQVVSKSSLQK. Residues 44-53 show a composition bias toward basic residues; it reads QKSKALHPRN. Low complexity predominate over residues 260–270; that stretch reads SQVMSPQVQPS.

The protein belongs to the methyltransferase superfamily. METTL16/RlmF family.

The protein resides in the cytoplasm. It carries out the reaction adenosine(1618) in 23S rRNA + S-adenosyl-L-methionine = N(6)-methyladenosine(1618) in 23S rRNA + S-adenosyl-L-homocysteine + H(+). In terms of biological role, specifically methylates the adenine in position 1618 of 23S rRNA. The protein is Ribosomal RNA large subunit methyltransferase F of Shewanella pealeana (strain ATCC 700345 / ANG-SQ1).